The sequence spans 275 residues: Nitrogenase iron protein 1 (275 aa).

Residue 9 to 16 (GKGGIGKS) coordinates ATP. Cysteine 98 contributes to the [4Fe-4S] cluster binding site. Arginine 101 carries the post-translational modification ADP-ribosylarginine; by dinitrogenase reductase ADP-ribosyltransferase. Cysteine 132 is a [4Fe-4S] cluster binding site.

This sequence belongs to the NifH/BchL/ChlL family. As to quaternary structure, homodimer. Requires [4Fe-4S] cluster as cofactor. In terms of processing, the reversible ADP-ribosylation of Arg-101 inactivates the nitrogenase reductase and regulates nitrogenase activity.

It carries out the reaction N2 + 8 reduced [2Fe-2S]-[ferredoxin] + 16 ATP + 16 H2O = H2 + 8 oxidized [2Fe-2S]-[ferredoxin] + 2 NH4(+) + 16 ADP + 16 phosphate + 6 H(+). Functionally, the key enzymatic reactions in nitrogen fixation are catalyzed by the nitrogenase complex, which has 2 components: the iron protein and the molybdenum-iron protein. This is Nitrogenase iron protein 1 (nifH1) from Methanobacterium ivanovii.